The chain runs to 301 residues: Lycopene elongase/hydratase (301 aa).

A disordered region spans residues 1–20 (MSADMAAQSESGEGGDDGRA). Transmembrane regions (helical) follow at residues 39-59 (FWLY…SALA), 61-81 (LFGL…NVFL), 110-130 (PVNT…FAVA), 133-153 (VAWP…APPF), 160-180 (LLDS…YAAV), 186-206 (PMLA…FSAI), 229-249 (TYWY…AVDL), 252-272 (GALL…GVDV), and 276-296 (YWWY…GALW).

Belongs to the UbiA prenyltransferase family.

It localises to the cell membrane. The enzyme catalyses all-trans-lycopene + dimethylallyl diphosphate + H2O = dihydroisopentenyldehydrorhodopin + diphosphate. The catalysed reaction is isopentenyldehydrorhodopin + dimethylallyl diphosphate + H2O = dihydrobisanhydrobacterioruberin + diphosphate. It participates in carotenoid biosynthesis. Involved in the biosynthesis of the acyclic C50 carotenoid bacterioruberin (BR). Acts as a bifunctional elongase/hydratase that catalyzes the elongation of lycopene by attaching a C(5) isoprene unit at C-2, as well as the hydroxylation of the previous end of the molecule. The enzyme acts at both ends of the substrate, and catalyzes the conversion of lycopene to the C(45) intermediate dihydroisopentenyldehydrorhodopin (DH-IDR) and the conversion of isopentenyldehydrorhodopin (IDR) to the C(50) carotenoid dihydrobisanhydrobacterioruberin (DH-BABR). Can also catalyze the conversion of lycopene to tetrahydrobisanhydrobacterioruberin (TH-BABR). The protein is Lycopene elongase/hydratase of Haloferax volcanii (strain ATCC 29605 / DSM 3757 / JCM 8879 / NBRC 14742 / NCIMB 2012 / VKM B-1768 / DS2) (Halobacterium volcanii).